A 696-amino-acid polypeptide reads, in one-letter code: Tensin-4 (696 aa).

The N-terminal stretch at 1 to 14 is a signal peptide; the sequence is MSSSLLAGGHMVSL. Disordered regions lie at residues 157-246, 271-344, and 356-416; these read LDGP…RAPQ, SLPH…CPAS, and LING…KDMQ. A compositionally biased stretch (polar residues) spans 192–203; it reads SSSNESLIFSGN. At S230 the chain carries Phosphoserine. A compositionally biased stretch (low complexity) spans 271-304; it reads SLPHSSLSSYPSSSRSLGSPASSSSSLHSLDRGS. Composition is skewed to polar residues over residues 326-344 and 372-397; these read QAVQ…CPAS and PGHQ…SPSK. Residues 429–536 form the SH2 domain; the sequence is WFKPSITREQ…ALPCKLTIPQ (108 aa). Residues 563–690 enclose the PTB domain; that stretch reads CHTLYLSSVS…QVISLVTALL (128 aa).

It belongs to the PTEN phosphatase protein family. As to quaternary structure, interacts (via SH2 domain) with Rho GTPase-activating protein DLC1 (via C-terminus); the interaction is independent of DLC1 tyrosine phosphorylation. Interacts with integrin ITGB1; the interaction displaces tensin TNS3 from the ITGB1 cytoplasmic tail and promotes ITGB1 stability. Interacts (via SH2 domain) with E3 ubiquitin-protein ligase CBL (phosphorylated on 'Tyr-780'); the interaction is enhanced in the presence of EGF and reduces interaction of CBL with EGFR. Interacts (via SH2 domain) with receptor tyrosine kinase MET (when phosphorylated); the interaction increases MET protein stability.

Its subcellular location is the cell junction. The protein resides in the focal adhesion. It localises to the cytoplasm. The protein localises to the cytoskeleton. In terms of biological role, promotes EGF-induced cell migration by displacing tensin TNS3 from the cytoplasmic tail of integrin ITGB1 which results in dissociation of TNS3 from focal adhesions, disassembly of actin stress fibers and initiation of cell migration. Suppresses ligand-induced degradation of EGFR by reducing EGFR ubiquitination in the presence of EGF. Increases MET protein stability by inhibiting MET endocytosis and subsequent lysosomal degradation which leads to increased cell survival, proliferation and migration. The polypeptide is Tensin-4 (Tns4) (Mus musculus (Mouse)).